The following is a 413-amino-acid chain: Cardiolipin synthase B (413 aa).

PLD phosphodiesterase domains are found at residues 108 to 135 and 285 to 312; these read VFRR…SAEH and RRRP…DPLS. Catalysis depends on residues His-113, Lys-115, Asp-120, His-290, Lys-292, and Asp-297. Positions 390–413 are disordered; it reads VDPPAQPTMETQDRVETENTGVKP.

The protein belongs to the phospholipase D family. Cardiolipin synthase subfamily. ClsB sub-subfamily.

The protein localises to the cell membrane. It catalyses the reaction 2 a 1,2-diacyl-sn-glycero-3-phospho-(1'-sn-glycerol) = a cardiolipin + glycerol. In terms of biological role, catalyzes the phosphatidyl group transfer from one phosphatidylglycerol molecule to another to form cardiolipin (CL) (diphosphatidylglycerol) and glycerol. The polypeptide is Cardiolipin synthase B (Escherichia coli O157:H7).